Consider the following 310-residue polypeptide: Lipoyl synthase (310 aa).

Residues C51, C56, C62, C77, C81, C84, and S290 each contribute to the [4Fe-4S] cluster site. A Radical SAM core domain is found at 63–280; the sequence is WSRKTATYLA…RRVGESLGLF (218 aa).

It belongs to the radical SAM superfamily. Lipoyl synthase family. It depends on [4Fe-4S] cluster as a cofactor.

The protein localises to the cytoplasm. The enzyme catalyses [[Fe-S] cluster scaffold protein carrying a second [4Fe-4S](2+) cluster] + N(6)-octanoyl-L-lysyl-[protein] + 2 oxidized [2Fe-2S]-[ferredoxin] + 2 S-adenosyl-L-methionine + 4 H(+) = [[Fe-S] cluster scaffold protein] + N(6)-[(R)-dihydrolipoyl]-L-lysyl-[protein] + 4 Fe(3+) + 2 hydrogen sulfide + 2 5'-deoxyadenosine + 2 L-methionine + 2 reduced [2Fe-2S]-[ferredoxin]. Its pathway is protein modification; protein lipoylation via endogenous pathway; protein N(6)-(lipoyl)lysine from octanoyl-[acyl-carrier-protein]: step 2/2. Functionally, catalyzes the radical-mediated insertion of two sulfur atoms into the C-6 and C-8 positions of the octanoyl moiety bound to the lipoyl domains of lipoate-dependent enzymes, thereby converting the octanoylated domains into lipoylated derivatives. The protein is Lipoyl synthase of Chlamydia abortus (strain DSM 27085 / S26/3) (Chlamydophila abortus).